A 169-amino-acid polypeptide reads, in one-letter code: TPD1 protein homolog 1B (169 aa).

The first 25 residues, 1–25 (MADCTTMRLASSVTIILLLLVASQA), serve as a signal peptide directing secretion.

As to expression, expressed in roots, and at low levels in anthers during meiosis.

Its function is as follows. May play a role during anther development. In Oryza sativa subsp. japonica (Rice), this protein is TPD1 protein homolog 1B.